The sequence spans 378 residues: Cobalt-precorrin-5B C(1)-methyltransferase (378 aa).

This sequence belongs to the CbiD family.

It carries out the reaction Co-precorrin-5B + S-adenosyl-L-methionine = Co-precorrin-6A + S-adenosyl-L-homocysteine. It participates in cofactor biosynthesis; adenosylcobalamin biosynthesis; cob(II)yrinate a,c-diamide from sirohydrochlorin (anaerobic route): step 6/10. Functionally, catalyzes the methylation of C-1 in cobalt-precorrin-5B to form cobalt-precorrin-6A. In Tolumonas auensis (strain DSM 9187 / NBRC 110442 / TA 4), this protein is Cobalt-precorrin-5B C(1)-methyltransferase.